Consider the following 401-residue polypeptide: UPF0242 protein CCA_01002 (401 aa).

It belongs to the UPF0242 family.

This chain is UPF0242 protein CCA_01002, found in Chlamydia caviae (strain ATCC VR-813 / DSM 19441 / 03DC25 / GPIC) (Chlamydophila caviae).